The following is a 99-amino-acid chain: Integration host factor subunit alpha (99 aa).

Residues 49–71 (FGNFDLRDKNQRPGRNPKTGEDI) form a disordered region.

Belongs to the bacterial histone-like protein family. As to quaternary structure, heterodimer of an alpha and a beta chain.

Its function is as follows. This protein is one of the two subunits of integration host factor, a specific DNA-binding protein that functions in genetic recombination as well as in transcriptional and translational control. The sequence is that of Integration host factor subunit alpha from Shewanella frigidimarina (strain NCIMB 400).